The following is a 406-amino-acid chain: Coenzyme A biosynthesis bifunctional protein CoaBC (406 aa).

Residues Met-1–His-191 form a phosphopantothenoylcysteine decarboxylase region. Cys-157 functions as the Proton donor in the catalytic mechanism. The tract at residues Val-192–Ser-406 is phosphopantothenate--cysteine ligase. CTP contacts are provided by Asp-281, Lys-291, Phe-325, Lys-339, and Lys-343.

The protein in the N-terminal section; belongs to the HFCD (homo-oligomeric flavin containing Cys decarboxylase) superfamily. This sequence in the C-terminal section; belongs to the PPC synthetase family. Mg(2+) is required as a cofactor. The cofactor is FMN.

The enzyme catalyses N-[(R)-4-phosphopantothenoyl]-L-cysteine + H(+) = (R)-4'-phosphopantetheine + CO2. It carries out the reaction (R)-4'-phosphopantothenate + L-cysteine + CTP = N-[(R)-4-phosphopantothenoyl]-L-cysteine + CMP + diphosphate + H(+). It functions in the pathway cofactor biosynthesis; coenzyme A biosynthesis; CoA from (R)-pantothenate: step 2/5. It participates in cofactor biosynthesis; coenzyme A biosynthesis; CoA from (R)-pantothenate: step 3/5. Catalyzes two sequential steps in the biosynthesis of coenzyme A. In the first step cysteine is conjugated to 4'-phosphopantothenate to form 4-phosphopantothenoylcysteine. In the second step the latter compound is decarboxylated to form 4'-phosphopantotheine. The sequence is that of Coenzyme A biosynthesis bifunctional protein CoaBC from Bacillus subtilis (strain 168).